A 339-amino-acid polypeptide reads, in one-letter code: Protein LicA (339 aa).

A run of 9 repeats spans residues 4-7 (INQS), 8-11 (INQS), 12-15 (INQS), 16-19 (INQS), 20-23 (INQS), 24-27 (INQS), 28-31 (INQS), 32-35 (INQS), and 36-39 (INQS). Residues 4 to 39 (INQSINQSINQSINQSINQSINQSINQSINQSINQS) form a 9 X 4 AA tandem repeats of I-N-Q-S region.

This sequence belongs to the peptidase S49 family.

Its function is as follows. Mediates phase variation of the LOS 6A2 and 12D9 epitopes. Phase variation of H.influenza LOS epitopes expressed by LicA is determined by a translational switch. The polypeptide is Protein LicA (licA) (Haemophilus influenzae).